A 521-amino-acid chain; its full sequence is Caspase-10 (521 aa).

Residues 1–219 (MKSQGQHWYS…GEEELVSQTD (219 aa)) constitute a propeptide that is removed on maturation. 2 DED domains span residues 19 to 97 (SFRE…HLNC) and 114 to 187 (LFRN…NIEK). 2 stretches are compositionally biased toward polar residues: residues 231 to 248 (SWQN…TNGA) and 259 to 268 (ASANTLNSET). Positions 231 to 269 (SWQNKHAGSNGNRATNGAPSLVSRGMQGASANTLNSETS) are disordered. Catalysis depends on residues histidine 358 and cysteine 401.

Belongs to the peptidase C14A family. Heterotetramer that consists of two anti-parallel arranged heterodimers, each one formed by a 23/17 kDa (p23/17) (depending on the splicing events) and a 12 kDa (p12) subunit. Self-associates. Interacts with FADD and CASP8. Found in a Fas signaling complex consisting of FAS, FADD, CASP8 and CASP10. Interacts with RFFL and RNF34; negatively regulate CASP10 through proteasomal degradation. Interacts with RIOK3. In terms of processing, cleavage by granzyme B and autocatalytic activity generate the two active subunits. As to expression, detectable in most tissues. Lowest expression is seen in brain, kidney, prostate, testis and colon.

It catalyses the reaction Strict requirement for Asp at position P1 and has a preferred cleavage sequence of Leu-Gln-Thr-Asp-|-Gly.. Functionally, involved in the activation cascade of caspases responsible for apoptosis execution. Recruited to both Fas- and TNFR-1 receptors in a FADD dependent manner. May participate in the granzyme B apoptotic pathways. Cleaves and activates effector caspases CASP3, CASP4, CASP6, CASP7, CASP8 and CASP9. Hydrolyzes the small- molecule substrates, Tyr-Val-Ala-Asp-|-AMC and Asp-Glu-Val-Asp-|-AMC. In terms of biological role, isoform 7 can enhance NF-kappaB activity but promotes only slight apoptosis. Isoform C is proteolytically inactive. The polypeptide is Caspase-10 (CASP10) (Homo sapiens (Human)).